The primary structure comprises 470 residues: MSDATDPGWFPLALRLRGARVVVVGGGGIALNKVRLLLAHAARIDILAPRLEDTLAAWQAEGRITHIAGEATPDRVRALLPGSRLVYAATDDRAVNRAVAAQADALNIPVCAVDDPEPSSFITPAQIHRGPVRIAISTGGAAPVLARRLRERIEAVMPAGLDALARFLQAERAHVVAACPDIGRRRRVWEDFLDGPGGEAAQRGEHAAARQVLDHLLAGAQTGGEVWLVGAGPGDPDLLTLRALHLMQNADSVLYDQLLPPALMDRVRRDAERVFVGKQRDRHTMPQDDINAELIRRARAGERVLRLKGGDPFIFGRGGEEIEALMAAGIPFQVVPGITAASGCAAYAGIPLTHRDCAQSCLFVTGHARRDGTLDLPWDSMARPGQTIAIYMGVTALPDLCTMLVRHGLPPDWPAAVVERGTRPDQRVLTGTLADLPALARAHAVGSPALVLVGQVVRHRVVTPPPLSGT.

Residues 1–213 (MSDATDPGWF…GEHAAARQVL (213 aa)) are precorrin-2 dehydrogenase /sirohydrochlorin ferrochelatase. NAD(+)-binding positions include 28–29 (GI) and 49–50 (PR). Residues 224–470 (GEVWLVGAGP…VVTPPPLSGT (247 aa)) form a uroporphyrinogen-III C-methyltransferase region. An S-adenosyl-L-methionine-binding site is contributed by Pro233. Asp256 (proton acceptor) is an active-site residue. Lys278 (proton donor) is an active-site residue. S-adenosyl-L-methionine is bound by residues 309–311 (GGD), Ile314, 339–340 (TA), Met392, and Gly421.

It in the N-terminal section; belongs to the precorrin-2 dehydrogenase / sirohydrochlorin ferrochelatase family. In the C-terminal section; belongs to the precorrin methyltransferase family.

The catalysed reaction is uroporphyrinogen III + 2 S-adenosyl-L-methionine = precorrin-2 + 2 S-adenosyl-L-homocysteine + H(+). It catalyses the reaction precorrin-2 + NAD(+) = sirohydrochlorin + NADH + 2 H(+). It carries out the reaction siroheme + 2 H(+) = sirohydrochlorin + Fe(2+). It participates in cofactor biosynthesis; adenosylcobalamin biosynthesis; precorrin-2 from uroporphyrinogen III: step 1/1. It functions in the pathway cofactor biosynthesis; adenosylcobalamin biosynthesis; sirohydrochlorin from precorrin-2: step 1/1. Its pathway is porphyrin-containing compound metabolism; siroheme biosynthesis; precorrin-2 from uroporphyrinogen III: step 1/1. The protein operates within porphyrin-containing compound metabolism; siroheme biosynthesis; siroheme from sirohydrochlorin: step 1/1. It participates in porphyrin-containing compound metabolism; siroheme biosynthesis; sirohydrochlorin from precorrin-2: step 1/1. Its function is as follows. Multifunctional enzyme that catalyzes the SAM-dependent methylations of uroporphyrinogen III at position C-2 and C-7 to form precorrin-2 via precorrin-1. Then it catalyzes the NAD-dependent ring dehydrogenation of precorrin-2 to yield sirohydrochlorin. Finally, it catalyzes the ferrochelation of sirohydrochlorin to yield siroheme. The polypeptide is Siroheme synthase (Gluconacetobacter diazotrophicus (strain ATCC 49037 / DSM 5601 / CCUG 37298 / CIP 103539 / LMG 7603 / PAl5)).